Consider the following 232-residue polypeptide: Large ribosomal subunit protein uL1 (232 aa).

The protein belongs to the universal ribosomal protein uL1 family. Part of the 50S ribosomal subunit.

Binds directly to 23S rRNA. The L1 stalk is quite mobile in the ribosome, and is involved in E site tRNA release. Functionally, protein L1 is also a translational repressor protein, it controls the translation of the L11 operon by binding to its mRNA. The chain is Large ribosomal subunit protein uL1 from Azobacteroides pseudotrichonymphae genomovar. CFP2.